A 118-amino-acid chain; its full sequence is MRWALLVLLAFLSPASQKSSNLEGGTKSVTRPTRSSAEITCDLTVINAFYIHWYLHQEGKAPQRLLYYDVSNSKDVLESGLSPGKYYTHTPRRWSWILILRNLIENDSGVYYCATWDR.

Residues 1 to 17 (MRWALLVLLAFLSPASQ) form the signal peptide. Residues 18–118 (KSSNLEGGTK…GVYYCATWDR (101 aa)) enclose the Ig-like domain. A disulfide bridge connects residues C41 and C113. N106 carries N-linked (GlcNAc...) asparagine glycosylation.

In terms of assembly, gamma-delta TR is a heterodimer composed of a gamma and delta chain; disulfide-linked. The gamma-delta TR is associated with the transmembrane signaling CD3 coreceptor proteins following the stoichiometry: a single gamma-delta TR heterodimer associates with one CD3D-CD3E heterodimer, one CD3G-CD3E heterodimer and one CD247 homodimer forming a stable octameric structure. Upon activation, gamma-delta TR complex associates with FCER1G to initiate intracellular signaling.

It is found in the cell membrane. Functionally, v region of the variable domain of T cell receptor (TR) gamma chain that participates in the antigen recognition. Gamma-delta TRs recognize a variety of self and foreign non-peptide antigens frequently expressed at the epithelial boundaries between the host and external environment, including endogenous lipids presented by MH-like protein CD1D and phosphoantigens presented by butyrophilin-like molecule BTN3A1. Upon antigen recognition induces rapid, innate-like immune responses involved in pathogen clearance and tissue repair. Binding of gamma-delta TR complex to antigen triggers phosphorylation of immunoreceptor tyrosine-based activation motifs (ITAMs) in the CD3 chains by the LCK and FYN kinases, allowing the recruitment, phosphorylation, and activation of ZAP70 that facilitates phosphorylation of the scaffolding proteins LCP2 and LAT. This lead to the formation of a supramolecular signalosome that recruits the phospholipase PLCG1, resulting in calcium mobilization and ERK activation, ultimately leading to T cell expansion and differentiation into effector cells. Gamma-delta TRs are produced through somatic rearrangement of a limited repertoire of variable (V), diversity (D), and joining (J) genes. The potential diversity of gamma-delta TRs is conferred by the unique ability to rearrange (D) genes in tandem and to utilize all three reading frames. The combinatorial diversity is considerably increased by the sequence exonuclease trimming and random nucleotide (N) region additions which occur during the V-(D)-J rearrangements. This is T cell receptor gamma variable 5 from Homo sapiens (Human).